A 157-amino-acid polypeptide reads, in one-letter code: Nicotinate dehydrogenase subunit A (157 aa).

Residues 3-79 (TTISLQVNGQ…GRNITTLEGL (77 aa)) enclose the 2Fe-2S ferredoxin-type domain. [2Fe-2S] cluster contacts are provided by Cys-41, Cys-46, Cys-49, and Cys-61.

Requires [2Fe-2S] cluster as cofactor.

The enzyme catalyses 2 Fe(III)-[cytochrome] + nicotinate + H2O = 2 Fe(II)-[cytochrome] + 6-hydroxynicotinate + 2 H(+). The protein operates within cofactor degradation; nicotinate degradation. In terms of biological role, subunit of the two-component enzyme NicAB that mediates nicotinate hydroxylation, the first step in the aerobic nicotinate degradation pathway. Mediates conversion of nicotinate into 6-hydroxynicotinate (6HNA). This chain is Nicotinate dehydrogenase subunit A (nicA), found in Pseudomonas putida (strain ATCC 47054 / DSM 6125 / CFBP 8728 / NCIMB 11950 / KT2440).